The sequence spans 258 residues: Redox-sensing transcriptional repressor Rex (258 aa).

The H-T-H motif DNA-binding region spans 26-65; the sequence is LYLRALTALSERSVPTVSSEELAAAAGVNSAKLRKDFSYL. Position 100–105 (100–105) interacts with NAD(+); that stretch reads GIGNLG. The segment at 219–258 is disordered; that stretch reads AGEEAAADGAAPPVAARKQQRSTGSADQGPDGDVPAVMPA. Residues 225–234 are compositionally biased toward low complexity; it reads ADGAAPPVAA.

The protein belongs to the transcriptional regulatory Rex family. Homodimer.

The protein localises to the cytoplasm. Modulates transcription of respiratory genes in response to changes in cellular NADH/NAD(+) redox state. Binds to the DNA sequence motif 5'-TGTGAACGCGTTCACA-3' in the promoter of the cydABCD operon. May play a general role as a sensor of cellular redox balance. The polypeptide is Redox-sensing transcriptional repressor Rex (Streptomyces coelicolor (strain ATCC BAA-471 / A3(2) / M145)).